The following is a 63-amino-acid chain: Large ribosomal subunit protein bL28 (63 aa).

This sequence belongs to the bacterial ribosomal protein bL28 family.

This Geobacter metallireducens (strain ATCC 53774 / DSM 7210 / GS-15) protein is Large ribosomal subunit protein bL28.